The following is a 468-amino-acid chain: uncharacterized protein (468 aa).

In terms of domain architecture, TRAM spans 3 to 61; sequence TFANGMTLDVTVDALAPGGKAVCRHEGRVIFVDRGLPGQQLHVRLTTVRKRFAEAECLA. [4Fe-4S] cluster contacts are provided by Cys74, Cys80, Cys83, and Cys162. Residues Gln288, Tyr317, Glu338, and Asp389 each contribute to the S-adenosyl-L-methionine site. Cys416 serves as the catalytic Nucleophile.

This sequence belongs to the class I-like SAM-binding methyltransferase superfamily. RNA M5U methyltransferase family.

This is an uncharacterized protein from Nitratidesulfovibrio vulgaris (strain ATCC 29579 / DSM 644 / CCUG 34227 / NCIMB 8303 / VKM B-1760 / Hildenborough) (Desulfovibrio vulgaris).